The sequence spans 691 residues: Elongation factor G (691 aa).

The region spanning 8–282 (ERVRNIGIAA…AVVDYLPAPV (275 aa)) is the tr-type G domain. GTP-binding positions include 17-24 (AHIDAGKT), 81-85 (DTPGH), and 135-138 (NKMD).

It belongs to the TRAFAC class translation factor GTPase superfamily. Classic translation factor GTPase family. EF-G/EF-2 subfamily.

The protein resides in the cytoplasm. Functionally, catalyzes the GTP-dependent ribosomal translocation step during translation elongation. During this step, the ribosome changes from the pre-translocational (PRE) to the post-translocational (POST) state as the newly formed A-site-bound peptidyl-tRNA and P-site-bound deacylated tRNA move to the P and E sites, respectively. Catalyzes the coordinated movement of the two tRNA molecules, the mRNA and conformational changes in the ribosome. The sequence is that of Elongation factor G from Prochlorococcus marinus (strain MIT 9312).